We begin with the raw amino-acid sequence, 461 residues long: tRNA modification GTPase MnmE (461 aa).

Positions 32, 89, and 128 each coordinate (6S)-5-formyl-5,6,7,8-tetrahydrofolate. Positions 224–387 (GHALSIVGKP…LSQKISEFFP (164 aa)) constitute a TrmE-type G domain. Asn234 lines the K(+) pocket. GTP contacts are provided by residues 234–239 (NAGKSS), 253–259 (SDIKGTT), and 278–281 (DTAG). Ser238 provides a ligand contact to Mg(2+). Residues Ser253, Ile255, and Thr258 each contribute to the K(+) site. Residue Thr259 participates in Mg(2+) binding. Lys461 serves as a coordination point for (6S)-5-formyl-5,6,7,8-tetrahydrofolate.

The protein belongs to the TRAFAC class TrmE-Era-EngA-EngB-Septin-like GTPase superfamily. TrmE GTPase family. As to quaternary structure, homodimer. Heterotetramer of two MnmE and two MnmG subunits. The cofactor is K(+).

Its subcellular location is the cytoplasm. In terms of biological role, exhibits a very high intrinsic GTPase hydrolysis rate. Involved in the addition of a carboxymethylaminomethyl (cmnm) group at the wobble position (U34) of certain tRNAs, forming tRNA-cmnm(5)s(2)U34. The polypeptide is tRNA modification GTPase MnmE (Helicobacter pylori (strain J99 / ATCC 700824) (Campylobacter pylori J99)).